A 500-amino-acid polypeptide reads, in one-letter code: Small ribosomal subunit protein uS3m (500 aa).

The protein belongs to the universal ribosomal protein uS3 family.

The protein localises to the mitochondrion. The sequence is that of Small ribosomal subunit protein uS3m (RPS3) from Prototheca wickerhamii.